A 603-amino-acid chain; its full sequence is DNA ligase (603 aa).

Residue glutamate 262 coordinates ATP. Lysine 264 (N6-AMP-lysine intermediate) is an active-site residue. The ATP site is built by arginine 269, arginine 285, glutamate 315, phenylalanine 355, arginine 432, and lysine 438.

Belongs to the ATP-dependent DNA ligase family. Requires Mg(2+) as cofactor.

It carries out the reaction ATP + (deoxyribonucleotide)n-3'-hydroxyl + 5'-phospho-(deoxyribonucleotide)m = (deoxyribonucleotide)n+m + AMP + diphosphate.. Functionally, DNA ligase that seals nicks in double-stranded DNA during DNA replication, DNA recombination and DNA repair. The chain is DNA ligase from Caldivirga maquilingensis (strain ATCC 700844 / DSM 13496 / JCM 10307 / IC-167).